A 366-amino-acid chain; its full sequence is Phospho-N-acetylmuramoyl-pentapeptide-transferase (366 aa).

10 consecutive transmembrane segments (helical) span residues 3-23 (QIFI…PVLI), 55-75 (IAIL…GLVF), 80-100 (PGVS…VGFA), 118-138 (AKLI…LQFP), 161-181 (IAVG…NIVI), 197-217 (LASG…FWQF), 235-255 (PLDL…FLWW), 262-282 (IFMG…LSIT), 287-307 (LLMI…VIQV), and 341-361 (FWLL…GEWL).

The protein belongs to the glycosyltransferase 4 family. MraY subfamily. Requires Mg(2+) as cofactor.

It localises to the cell membrane. The enzyme catalyses UDP-N-acetyl-alpha-D-muramoyl-L-alanyl-gamma-D-glutamyl-meso-2,6-diaminopimeloyl-D-alanyl-D-alanine + di-trans,octa-cis-undecaprenyl phosphate = di-trans,octa-cis-undecaprenyl diphospho-N-acetyl-alpha-D-muramoyl-L-alanyl-D-glutamyl-meso-2,6-diaminopimeloyl-D-alanyl-D-alanine + UMP. It functions in the pathway cell wall biogenesis; peptidoglycan biosynthesis. In terms of biological role, catalyzes the initial step of the lipid cycle reactions in the biosynthesis of the cell wall peptidoglycan: transfers peptidoglycan precursor phospho-MurNAc-pentapeptide from UDP-MurNAc-pentapeptide onto the lipid carrier undecaprenyl phosphate, yielding undecaprenyl-pyrophosphoryl-MurNAc-pentapeptide, known as lipid I. The sequence is that of Phospho-N-acetylmuramoyl-pentapeptide-transferase from Corynebacterium urealyticum (strain ATCC 43042 / DSM 7109).